The following is a 406-amino-acid chain: Probable tRNA sulfurtransferase (406 aa).

A THUMP domain is found at 62 to 167 (AEVSNRLTKV…QDATYLSFED (106 aa)). ATP contacts are provided by residues 185-186 (ML), 210-211 (HF), Arg267, Gly289, and Gln298.

The protein belongs to the ThiI family.

The protein localises to the cytoplasm. The catalysed reaction is [ThiI sulfur-carrier protein]-S-sulfanyl-L-cysteine + a uridine in tRNA + 2 reduced [2Fe-2S]-[ferredoxin] + ATP + H(+) = [ThiI sulfur-carrier protein]-L-cysteine + a 4-thiouridine in tRNA + 2 oxidized [2Fe-2S]-[ferredoxin] + AMP + diphosphate. It catalyses the reaction [ThiS sulfur-carrier protein]-C-terminal Gly-Gly-AMP + S-sulfanyl-L-cysteinyl-[cysteine desulfurase] + AH2 = [ThiS sulfur-carrier protein]-C-terminal-Gly-aminoethanethioate + L-cysteinyl-[cysteine desulfurase] + A + AMP + 2 H(+). The protein operates within cofactor biosynthesis; thiamine diphosphate biosynthesis. Functionally, catalyzes the ATP-dependent transfer of a sulfur to tRNA to produce 4-thiouridine in position 8 of tRNAs, which functions as a near-UV photosensor. Also catalyzes the transfer of sulfur to the sulfur carrier protein ThiS, forming ThiS-thiocarboxylate. This is a step in the synthesis of thiazole, in the thiamine biosynthesis pathway. The sulfur is donated as persulfide by IscS. The protein is Probable tRNA sulfurtransferase of Lactococcus lactis subsp. cremoris (strain MG1363).